A 91-amino-acid polypeptide reads, in one-letter code: Sm-like protein LSM36B (91 aa).

One can recognise a Sm domain in the interval 14–86 (TPADFLKSIR…VLYISTTKGT (73 aa)).

This sequence belongs to the snRNP Sm proteins family. Component of the heptameric LSM1-LSM7 complex that forms a seven-membered ring structure with a donut shape. The LSM subunits are arranged in the order LSM1, LSM2, LSM3, LSM6, LSM5, LSM7 and LSM4. Component of the heptameric LSM2-LSM8 complex that forms a seven-membered ring structure with a donut shape. The LSM subunits are arranged in the order LSM8, LSM2, LSM3, LSM6, LSM5, LSM7 and LSM4. LSM6B subunit interacts only with its two neighboring subunits, LSM3A or LSM3B and LSM5. Expressed in roots, leaves, stems, flowers and siliques.

The protein localises to the cytoplasm. It localises to the nucleus. In terms of biological role, component of LSM protein complexes, which are involved in RNA processing. Component of the cytoplasmic LSM1-LSM7 complex which is involved in mRNA degradation by promoting decapping and leading to accurate 5'-3' mRNA decay. The cytoplasmic LSM1-LSM7 complex regulates developmental gene expression by the decapping of specific development-related transcripts. Component of the nuclear LSM2-LSM8 complex which is involved splicing nuclear mRNAs. LSM2-LSM8 binds directly to the U6 small nuclear RNAs (snRNAs) and is essential for accurate splicing of selected development-related mRNAs through the stabilization of the spliceosomal U6 snRNA. Plays a critical role in the regulation of development-related gene expression. The sequence is that of Sm-like protein LSM36B from Arabidopsis thaliana (Mouse-ear cress).